Consider the following 213-residue polypeptide: Uridine kinase (213 aa).

15-22 (GASASGKS) lines the ATP pocket.

This sequence belongs to the uridine kinase family.

It is found in the cytoplasm. It carries out the reaction uridine + ATP = UMP + ADP + H(+). It catalyses the reaction cytidine + ATP = CMP + ADP + H(+). It participates in pyrimidine metabolism; CTP biosynthesis via salvage pathway; CTP from cytidine: step 1/3. It functions in the pathway pyrimidine metabolism; UMP biosynthesis via salvage pathway; UMP from uridine: step 1/1. The sequence is that of Uridine kinase from Sodalis glossinidius (strain morsitans).